Reading from the N-terminus, the 694-residue chain is Junctophilin-2 (694 aa).

Residues 1–672 are Cytoplasmic-facing; that stretch reads MSGGRFDFDD…EVEVEEVPNT (672 aa). 6 MORN repeats span residues 14-36, 38-59, 60-79, 82-104, 106-128, and 129-151; these read YCGGWEGGKAHGHGLCTGPKGQG, YSGSWNFGFEVAGVYTWPSGNT, FEGYWSQGKRHGLGIETKGR, YKGEWTHGFKGRYGTRQSTSSGA, YEGTWNNGLQDGYGTETYADGGT, and YQGQFTNGMRHGYGVRQSVPYGM. Residues S162 and S165 each carry the phosphoserine modification. Disordered regions lie at residues 164–192 and 231–278; these read SSLRSEHSNGTVAPDSPASPAADGPALPS and RAES…AAPF. The span at 176 to 189 shows a compositional bias: low complexity; that stretch reads APDSPASPAADGPA. The span at 235–244 shows a compositional bias: polar residues; sequence RTSVGSQRSR. Residues 250–267 show a composition bias toward low complexity; it reads SDLSSGASDAASTASLGE. MORN repeat units follow at residues 290 to 312 and 313 to 335; these read YMGEWKNDKRSGFGVSERSSGLR and YEGEWLDNLRHGYGCTTLPDGHR. The Bipartite nuclear localization signal motif lies at 350 to 364; sequence KRRVLPLKSNKVRQK. S445, S447, and S466 each carry phosphoserine. Positions 448 to 663 are disordered; sequence LLEPPDRGAA…KEAAQAAEAE (216 aa). The segment covering 467 to 476 has biased composition (basic and acidic residues); it reads PQLHERETPR. T474 is subject to Phosphothreonine. Residues 478-491 are compositionally biased toward pro residues; that stretch reads EGGPPSPAGTPPQP. Position 483 is a phosphoserine (S483). Phosphothreonine is present on T487. The short motif at 492–496 is the Nuclear localization signal element; the sequence is KRPRP. The span at 522–540 shows a compositional bias: low complexity; the sequence is SRPATPAAAGAGRRSPARP. Residues S536, S542, S596, and S600 each carry the phosphoserine modification. Residues 589 to 610 are compositionally biased toward low complexity; sequence PEAADPDSAPASPATAPGQAPA. The chain crosses the membrane as a helical; Anchor for type IV membrane protein span at residues 673-693; sequence VLICMVILLNIGLAILFVHLL.

The protein belongs to the junctophilin family. As to quaternary structure, interacts with TRPC3. Interacts with BAG5 and HSPA8; the interaction with HSPA8 is increased in the presence of BAG5. Junctophilin-2 N-terminal fragment: Interacts with MEF2C. Proteolytically cleaved by calpain in response to cardiac stress. The major cleavage site takes place at the C-terminus and leads to the release of the Junctophilin-2 N-terminal fragment chain (JP2NT). Post-translationally, phosphorylation on Ser-165, probably by PKC, affects RYR1-mediated calcium ion release, interaction with TRPC3, and skeletal muscle myotubule development.

The protein localises to the cell membrane. It is found in the sarcoplasmic reticulum membrane. The protein resides in the endoplasmic reticulum membrane. It localises to the nucleus. In terms of biological role, membrane-binding protein that provides a structural bridge between the plasma membrane and the sarcoplasmic reticulum and is required for normal excitation-contraction coupling in cardiomyocytes. Provides a structural foundation for functional cross-talk between the cell surface and intracellular Ca(2+) release channels by maintaining the 12-15 nm gap between the sarcolemma and the sarcoplasmic reticulum membranes in the cardiac dyads. Necessary for proper intracellular Ca(2+) signaling in cardiac myocytes via its involvement in ryanodine receptor-mediated calcium ion release. Contributes to the construction of skeletal muscle triad junctions. Its function is as follows. Transcription repressor required to safeguard against the deleterious effects of cardiac stress. Generated following cleavage of the Junctophilin-2 chain by calpain in response to cardiac stress in cardiomyocytes. Following cleavage and release from the membrane, translocates to the nucleus, binds DNA and represses expression of genes implicated in cell growth and differentiation, hypertrophy, inflammation and fibrosis. Modifies the transcription profile and thereby attenuates pathological remodeling in response to cardiac stress. Probably acts by competing with MEF2 transcription factors and TATA-binding proteins. The polypeptide is Junctophilin-2 (JPH2) (Oryctolagus cuniculus (Rabbit)).